A 227-amino-acid polypeptide reads, in one-letter code: Cytochrome c oxidase subunit 2 (227 aa).

Residues 1–14 lie on the Mitochondrial intermembrane side of the membrane; sequence MAHAVQYGFQDAAA. The helical transmembrane segment at 15–45 threads the bilayer; that stretch reads PIMEELLYFHDHTLMIVFMISSLVLYIISLM. At 46 to 59 the chain is on the mitochondrial matrix side; it reads LSTELTHTSTMDAQ. A helical transmembrane segment spans residues 60–87; sequence EVETVWTILPAVILILIALPSLRILYMM. Residues 88–227 lie on the Mitochondrial intermembrane side of the membrane; it reads DEIETPSLTL…YFEEWLLKTL (140 aa). Cu cation contacts are provided by H161, C196, E198, C200, H204, and M207. E198 provides a ligand contact to Mg(2+). Y218 is modified (phosphotyrosine).

The protein belongs to the cytochrome c oxidase subunit 2 family. Component of the cytochrome c oxidase (complex IV, CIV), a multisubunit enzyme composed of 14 subunits. The complex is composed of a catalytic core of 3 subunits MT-CO1, MT-CO2 and MT-CO3, encoded in the mitochondrial DNA, and 11 supernumerary subunits COX4I, COX5A, COX5B, COX6A, COX6B, COX6C, COX7A, COX7B, COX7C, COX8 and NDUFA4, which are encoded in the nuclear genome. The complex exists as a monomer or a dimer and forms supercomplexes (SCs) in the inner mitochondrial membrane with NADH-ubiquinone oxidoreductase (complex I, CI) and ubiquinol-cytochrome c oxidoreductase (cytochrome b-c1 complex, complex III, CIII), resulting in different assemblies (supercomplex SCI(1)III(2)IV(1) and megacomplex MCI(2)III(2)IV(2)). Found in a complex with TMEM177, COA6, COX18, COX20, SCO1 and SCO2. Interacts with TMEM177 in a COX20-dependent manner. Interacts with COX20. Interacts with COX16. Requires Cu cation as cofactor.

The protein resides in the mitochondrion inner membrane. It carries out the reaction 4 Fe(II)-[cytochrome c] + O2 + 8 H(+)(in) = 4 Fe(III)-[cytochrome c] + 2 H2O + 4 H(+)(out). Functionally, component of the cytochrome c oxidase, the last enzyme in the mitochondrial electron transport chain which drives oxidative phosphorylation. The respiratory chain contains 3 multisubunit complexes succinate dehydrogenase (complex II, CII), ubiquinol-cytochrome c oxidoreductase (cytochrome b-c1 complex, complex III, CIII) and cytochrome c oxidase (complex IV, CIV), that cooperate to transfer electrons derived from NADH and succinate to molecular oxygen, creating an electrochemical gradient over the inner membrane that drives transmembrane transport and the ATP synthase. Cytochrome c oxidase is the component of the respiratory chain that catalyzes the reduction of oxygen to water. Electrons originating from reduced cytochrome c in the intermembrane space (IMS) are transferred via the dinuclear copper A center (CU(A)) of subunit 2 and heme A of subunit 1 to the active site in subunit 1, a binuclear center (BNC) formed by heme A3 and copper B (CU(B)). The BNC reduces molecular oxygen to 2 water molecules using 4 electrons from cytochrome c in the IMS and 4 protons from the mitochondrial matrix. This is Cytochrome c oxidase subunit 2 (MT-CO2) from Galago senegalensis (Northern lesser bushbaby).